The chain runs to 148 residues: Ribosomal RNA large subunit methyltransferase H (148 aa).

S-adenosyl-L-methionine is bound by residues Leu62, Gly94, and 113–118; that span reads LSLLTL.

The protein belongs to the RNA methyltransferase RlmH family. In terms of assembly, homodimer.

The protein resides in the cytoplasm. It carries out the reaction pseudouridine(1915) in 23S rRNA + S-adenosyl-L-methionine = N(3)-methylpseudouridine(1915) in 23S rRNA + S-adenosyl-L-homocysteine + H(+). Specifically methylates the pseudouridine at position 1915 (m3Psi1915) in 23S rRNA. The protein is Ribosomal RNA large subunit methyltransferase H of Deinococcus geothermalis (strain DSM 11300 / CIP 105573 / AG-3a).